The primary structure comprises 292 residues: MPAALVENSQVICEVWASNLEEEMRKIREIVLSYSYIAMDTEFPGVVVRPIGEFRSSIDYQYQLLRCNVDLLKIIQLGLTFTNEKGEYPSGINTWQFNFKFNLTEDMYSQDSIDLLANSGLQFQKHEEEGIDTLHFAELLMTSGVVLCDNVKWLSFHSGYDFGYMVKLLTDSRLPEEEHEFFHILNLFFPSIYDVKYLMKSCKNLKGGLQEVADQLDLQRIGRQHQAGSDSLLTGMAFFRMKELFFEDSIDDAKYCGRLYGLGTGVAQKQNEDVDSAQEKMSILAIINNMQQ.

Asp40, Glu42, Asp161, and Asp230 together coordinate a divalent metal cation.

This sequence belongs to the CAF1 family. In terms of assembly, component of the CCR4-NOT complex; distinct complexes seem to exist that differ in the participation of probably mutually exclusive catalytic subunits; the complex contains two deadenylase subunits, CNOT6 or CNOT6L, and CNOT7 or CNOT8. In the complex interacts directly with CNOT1. Interacts with BTG1, BTG2 and TOB1. Interacts with BTG4.

It localises to the cytoplasm. The protein localises to the nucleus. The catalysed reaction is Exonucleolytic cleavage of poly(A) to 5'-AMP.. Functionally, has 3'-5' poly(A) exoribonuclease activity for synthetic poly(A) RNA substrate. Its function seems to be partially redundant with that of CNOT7. Catalytic component of the CCR4-NOT complex which is linked to various cellular processes including bulk mRNA degradation, miRNA-mediated repression, translational repression during translational initiation and general transcription regulation. During miRNA-mediated repression the complex also seems to act as translational repressor during translational initiation. Additional complex functions may be a consequence of its influence on mRNA expression. Associates with members of the BTG family such as TOB1 and BTG2 and is required for their anti-proliferative activity. This chain is CCR4-NOT transcription complex subunit 8 (CNOT8), found in Homo sapiens (Human).